Here is a 307-residue protein sequence, read N- to C-terminus: Ribosomal RNA small subunit methyltransferase H (307 aa).

S-adenosyl-L-methionine is bound by residues 33-35 (GGY), Asp-51, Phe-82, Asp-96, and Gln-103.

The protein belongs to the methyltransferase superfamily. RsmH family.

Its subcellular location is the cytoplasm. It carries out the reaction cytidine(1402) in 16S rRNA + S-adenosyl-L-methionine = N(4)-methylcytidine(1402) in 16S rRNA + S-adenosyl-L-homocysteine + H(+). Its function is as follows. Specifically methylates the N4 position of cytidine in position 1402 (C1402) of 16S rRNA. The sequence is that of Ribosomal RNA small subunit methyltransferase H from Rickettsia peacockii (strain Rustic).